Consider the following 298-residue polypeptide: Tyrosine recombinase XerD (298 aa).

Residues 3–88 (TLEHPLIDRF…GLRGFYRYCL (86 aa)) enclose the Core-binding (CB) domain. The 184-residue stretch at 109 to 292 (PLPKSLSEAD…ARARLQDLHA (184 aa)) folds into the Tyr recombinase domain. Active-site residues include R149, K173, H244, R247, and H270. Residue Y279 is the O-(3'-phospho-DNA)-tyrosine intermediate of the active site.

Belongs to the 'phage' integrase family. XerD subfamily. As to quaternary structure, forms a cyclic heterotetrameric complex composed of two molecules of XerC and two molecules of XerD.

It is found in the cytoplasm. Its function is as follows. Site-specific tyrosine recombinase, which acts by catalyzing the cutting and rejoining of the recombining DNA molecules. The XerC-XerD complex is essential to convert dimers of the bacterial chromosome into monomers to permit their segregation at cell division. It also contributes to the segregational stability of plasmids. This Pseudomonas aeruginosa (strain ATCC 15692 / DSM 22644 / CIP 104116 / JCM 14847 / LMG 12228 / 1C / PRS 101 / PAO1) protein is Tyrosine recombinase XerD.